We begin with the raw amino-acid sequence, 320 residues long: Lipoyl synthase (320 aa).

7 residues coordinate [4Fe-4S] cluster: cysteine 67, cysteine 72, cysteine 78, cysteine 93, cysteine 97, cysteine 100, and serine 307. A Radical SAM core domain is found at 79-296 (FNHGTATFMI…RDKANEMGFE (218 aa)).

Belongs to the radical SAM superfamily. Lipoyl synthase family. The cofactor is [4Fe-4S] cluster.

The protein localises to the cytoplasm. The enzyme catalyses [[Fe-S] cluster scaffold protein carrying a second [4Fe-4S](2+) cluster] + N(6)-octanoyl-L-lysyl-[protein] + 2 oxidized [2Fe-2S]-[ferredoxin] + 2 S-adenosyl-L-methionine + 4 H(+) = [[Fe-S] cluster scaffold protein] + N(6)-[(R)-dihydrolipoyl]-L-lysyl-[protein] + 4 Fe(3+) + 2 hydrogen sulfide + 2 5'-deoxyadenosine + 2 L-methionine + 2 reduced [2Fe-2S]-[ferredoxin]. It participates in protein modification; protein lipoylation via endogenous pathway; protein N(6)-(lipoyl)lysine from octanoyl-[acyl-carrier-protein]: step 2/2. In terms of biological role, catalyzes the radical-mediated insertion of two sulfur atoms into the C-6 and C-8 positions of the octanoyl moiety bound to the lipoyl domains of lipoate-dependent enzymes, thereby converting the octanoylated domains into lipoylated derivatives. The protein is Lipoyl synthase of Haemophilus influenzae (strain 86-028NP).